The following is a 97-amino-acid chain: Coiled-coil domain-containing protein 167 (97 aa).

A coiled-coil region spans residues 10-79; that stretch reads GVALEIDGLE…LRQENRKNML (70 aa). Residues 78-95 form a helical membrane-spanning segment; it reads MLLSVAIFILLTLVYAYW.

The protein resides in the membrane. The sequence is that of Coiled-coil domain-containing protein 167 (CCDC167) from Homo sapiens (Human).